The sequence spans 811 residues: Phosphoinositide 3-kinase adapter protein 1 (811 aa).

Positions 8–146 (RGCDILIFYS…AVRKAISEDS (139 aa)) constitute a TIR domain. A necessary and sufficient to mediate inhibition of NF-kappa-B downstream of activated TLRs; may mediate interaction with MYD88 and TIRAP region spans residues 10-145 (CDILIFYSPD…AAVRKAISED (136 aa)). Residues 146-169 (SGCDSVTDTEPEDERELPFSKQTN) form a disordered region. One can recognise a DBB domain in the interval 182-318 (VQPDRIRCGA…NIPASGLHLF (137 aa)). Tyrosine 264 carries the post-translational modification Phosphotyrosine. Tyrosine 420, tyrosine 445, and tyrosine 460 each carry phosphotyrosine; by SYK. Tyrosine 513 bears the Phosphotyrosine; by ABL1 mark. The tract at residues 525–551 (DLANRPPVPVPRPEASAPGPPPPPDNE) is disordered. The span at 530–550 (PPVPVPRPEASAPGPPPPPDN) shows a compositional bias: pro residues. Residues tyrosine 553, tyrosine 570, and tyrosine 594 each carry the phosphotyrosine; by ABL1 modification. The residue at position 642 (serine 642) is a Phosphoserine. Position 694 is a phosphotyrosine; by ABL1 (tyrosine 694). Positions 702-811 (VLPARTELRR…PPPPVPPRGR (110 aa)) are disordered. Positions 707-716 (TELRRGDWKT) are enriched in basic and acidic residues. Residues 717–740 (DSMSSTASSTSNRSSTRSLLSVSS) show a composition bias toward low complexity. Phosphoserine is present on serine 718. The span at 801–811 (HPPPPVPPRGR) shows a compositional bias: pro residues.

As to quaternary structure, homooligomer. Interacts (phosphorylated on tyrosine residues within YXXM motifs) with PIK3R1 (via SH2 domain); required for BCR- and TLR-mediated activation of phosphoinositide 3-kinase. Interacts (via polyproline C-terminal region) with ABI1 (via SH3 domain); the interaction promotes phosphorylation of PIK3AP1 by ABL1. May interact with MYD88 and TIRAP. Constitutively phosphorylated. Phosphorylated on tyrosine residues in C-terminal region by ABL1. Phosphorylated on tyrosine residues within the YXXM motifs by BTK and SYK. Isoform 1 and isoform 2 are phosphorylated on tyrosine residues, most likely within the YXXM motifs, via CD19 activation. Toll-like receptor activation induces appearance of a phosphorylated form associated with membranes. Predominantly expressed in spleen (at protein level). Expressed at lower levels in thymus, liver and lung. Expressed in B-cells, macrophages and natural killer (NK) cells.

It localises to the cytoplasm. It is found in the cell membrane. Functionally, signaling adapter that contributes to B-cell development by linking B-cell receptor (BCR) signaling to the phosphoinositide 3-kinase (PI3K)-Akt signaling pathway. Has a complementary role to the BCR coreceptor CD19, coupling BCR and PI3K activation by providing a docking site for the PI3K subunit PIK3R1. Alternatively, links Toll-like receptor (TLR) signaling to PI3K activation, a process preventing excessive inflammatory cytokine production. Also involved in the activation of PI3K in natural killer cells. May be involved in the survival of mature B-cells via activation of REL. The polypeptide is Phosphoinositide 3-kinase adapter protein 1 (Pik3ap1) (Mus musculus (Mouse)).